The sequence spans 113 residues: Large ribosomal subunit protein bL19 (113 aa).

This sequence belongs to the bacterial ribosomal protein bL19 family.

Functionally, this protein is located at the 30S-50S ribosomal subunit interface and may play a role in the structure and function of the aminoacyl-tRNA binding site. In Mycolicibacterium vanbaalenii (strain DSM 7251 / JCM 13017 / BCRC 16820 / KCTC 9966 / NRRL B-24157 / PYR-1) (Mycobacterium vanbaalenii), this protein is Large ribosomal subunit protein bL19.